Here is a 182-residue protein sequence, read N- to C-terminus: UPF0301 protein CHU_1773 (182 aa).

Belongs to the UPF0301 (AlgH) family.

The polypeptide is UPF0301 protein CHU_1773 (Cytophaga hutchinsonii (strain ATCC 33406 / DSM 1761 / CIP 103989 / NBRC 15051 / NCIMB 9469 / D465)).